A 557-amino-acid polypeptide reads, in one-letter code: Tektin-5 (557 aa).

Residues 302–386 (DNIRHAQNMR…LLERAIVAKE (85 aa)) adopt a coiled-coil conformation. Repeat copies occupy residues 507-512 (CSGSAL), 513-518 (CKGPAS), 519-524 (CGGGAS), 525-530 (CGGGAS), 531-536 (CGGHAP), and 537-541 (CGSAL). The 6 X 6 AA approximate tandem repeats of C-[GSK]-G-[GSPH]-A-[SLP] stretch occupies residues 507 to 541 (CSGSALCKGPASCGGGASCGGGASCGGHAPCGSAL).

This sequence belongs to the tektin family. As to quaternary structure, microtubule inner protein component of sperm flagellar doublet microtubules. Interacts with TEKT3. Ubiquitinated, leading to its degradation. Deubiquitinated by USP16, promoting its stability. As to expression, strongly expressed in germ cells of the testis (at protein level). Expressed in spermatozoa. Also detected in brain.

It is found in the cytoplasm. It localises to the cytoskeleton. The protein resides in the flagellum axoneme. Sperm-specific microtubule inner protein (MIP) part of the dynein-decorated doublet microtubules (DMTs) in flagellar axoneme. Forms an extensive interaction network in different conformations that reinforces the helix bundle composed by other tektin proteins (TEKT1 to TEKT4) and MIPs to anchor the tektin bundle onto the tubulin wall of A-tubule of the sperm flagellum. The polypeptide is Tektin-5 (Mus musculus (Mouse)).